The sequence spans 226 residues: ATP-dependent dethiobiotin synthetase BioD (226 aa).

12 to 17 (GVGKTV) provides a ligand contact to ATP. Threonine 16 contacts Mg(2+). Lysine 37 is an active-site residue. Threonine 41 is a binding site for substrate. ATP contacts are provided by residues aspartate 49, 108–111 (EGAG), and 169–170 (GS). 2 residues coordinate Mg(2+): aspartate 49 and glutamate 108.

It belongs to the dethiobiotin synthetase family. As to quaternary structure, homodimer. Mg(2+) is required as a cofactor.

It is found in the cytoplasm. The enzyme catalyses (7R,8S)-7,8-diammoniononanoate + CO2 + ATP = (4R,5S)-dethiobiotin + ADP + phosphate + 3 H(+). It participates in cofactor biosynthesis; biotin biosynthesis; biotin from 7,8-diaminononanoate: step 1/2. In terms of biological role, catalyzes a mechanistically unusual reaction, the ATP-dependent insertion of CO2 between the N7 and N8 nitrogen atoms of 7,8-diaminopelargonic acid (DAPA, also called 7,8-diammoniononanoate) to form a ureido ring. This Mycobacterium marinum (strain ATCC BAA-535 / M) protein is ATP-dependent dethiobiotin synthetase BioD.